We begin with the raw amino-acid sequence, 152 residues long: Nucleoside diphosphate kinase B (152 aa).

The interaction with AKAP13 stretch occupies residues 1 to 66 (MANLERTFIA…DRPFFPGLVK (66 aa)). Residues Lys12, Phe60, Arg88, Thr94, Arg105, and Asn115 each contribute to the ATP site. His118 (pros-phosphohistidine intermediate) is an active-site residue.

It belongs to the NDK family. Hexamer of two different chains: An and B (A6, A5B, A4B2, A3B3, A2B4, AB5, B6). Interacts with CAPN8. Interacts with AKAP13. Interacts with ITGB1BP1 (via C-terminal domain region). Interacts with BCL2L10. The cofactor is Mg(2+). As to expression, expressed in the base region of the oxyntic and pyloric mucosae.

The protein resides in the cytoplasm. The protein localises to the cell projection. It is found in the lamellipodium. Its subcellular location is the ruffle. It localises to the nucleus. The catalysed reaction is a 2'-deoxyribonucleoside 5'-diphosphate + ATP = a 2'-deoxyribonucleoside 5'-triphosphate + ADP. It catalyses the reaction a ribonucleoside 5'-diphosphate + ATP = a ribonucleoside 5'-triphosphate + ADP. It carries out the reaction ATP + protein L-histidine = ADP + protein N-phospho-L-histidine.. In terms of biological role, major role in the synthesis of nucleoside triphosphates other than ATP. The ATP gamma phosphate is transferred to the NDP beta phosphate via a ping-pong mechanism, using a phosphorylated active-site intermediate. Negatively regulates Rho activity by interacting with AKAP13/LBC. Acts as a transcriptional activator of the MYC gene; binds DNA non-specifically. Binds to both single-stranded guanine- and cytosine-rich strands within the nuclease hypersensitive element (NHE) III(1) region of the MYC gene promoter. Does not bind to duplex NHE III(1). Has G-quadruplex (G4) DNA-binding activity, which is independent of its nucleotide-binding and kinase activity. Binds both folded and unfolded G4 with similar low nanomolar affinities. Stabilizes folded G4s regardless of whether they are prefolded or not. Exhibits histidine protein kinase activity. This chain is Nucleoside diphosphate kinase B (Nme2), found in Mus musculus (Mouse).